The chain runs to 471 residues: Putative multidrug resistance protein MdtD (471 aa).

The Periplasmic segment spans residues 1 to 11 (MTDLPDSTRWQ). A helical transmembrane segment spans residues 12–32 (LWIVAFGFFMQSLDTTIVNTA). Residues 33–48 (LPSMAQSLGESPLHMH) are Cytoplasmic-facing. Residues 49–69 (MVIVSYVLTVAVMLPASGWLA) traverse the membrane as a helical segment. Topologically, residues 70 to 76 (DKVGVRN) are periplasmic. A helical transmembrane segment spans residues 77–97 (IFFTAIVLFTLGSLFCALSGT). The Cytoplasmic portion of the chain corresponds to 98–101 (LNEL). A helical transmembrane segment spans residues 102 to 124 (LLARALQGVGGAMMVPVGRLTVM). Residues 125–137 (KIVPREQYMAAMT) are Periplasmic-facing. Residues 138–158 (FVTLPGQVGPLLGPALGGLLV) traverse the membrane as a helical segment. At 159-164 (EYASWH) the chain is on the cytoplasmic side. The helical transmembrane segment at 165–185 (WIFLINIPVGIIGAIATLMLM) threads the bilayer. The Periplasmic portion of the chain corresponds to 186–196 (PNYTMQTRRFD). A helical transmembrane segment spans residues 197–217 (LSGFLLLAVGMAVLTLALDGS). Topologically, residues 218–224 (KGTGLSP) are cytoplasmic. The helical transmembrane segment at 225-245 (LTIDGLVAVGVVALVLYLLHA) threads the bilayer. Over 246-262 (RNNNRALFSLKLFRTRT) the chain is Periplasmic. The chain crosses the membrane as a helical span at residues 263 to 283 (FSLGLAGSFAGRIGSGMLPFM). Residues 284–285 (TP) are Cytoplasmic-facing. A helical transmembrane segment spans residues 286–306 (VFLQIGLGFSPFHAGLMMIPM). Residues 307–341 (VLGSMGMKRIVVQVVNRFGYRRVLVATTLGLSLVT) lie on the Periplasmic side of the membrane. A helical membrane pass occupies residues 342-362 (LLFMTTALLGWYYVLPFVLFL). Over 363–395 (QGMVNSTRFSSMNTLTLKDLPDNLASSGNSLLS) the chain is Cytoplasmic. The chain crosses the membrane as a helical span at residues 396–416 (MIMQLSMSIGVTIAGLLLGLF). At 417–430 (GSQHVSIDSGTTQT) the chain is on the periplasmic side. The helical transmembrane segment at 431-451 (VFMYTWLSMALIIALPAFIFA) threads the bilayer. Over 452–471 (RVPNDTHQNVAISRRKRSAQ) the chain is Cytoplasmic.

Belongs to the major facilitator superfamily. TCR/Tet family.

It is found in the cell inner membrane. The chain is Putative multidrug resistance protein MdtD from Escherichia coli (strain SE11).